Consider the following 412-residue polypeptide: Interferon-inducible GTPase 5 (412 aa).

Positions 51-234 (TRLEVGVTGE…PMLVTTWEHD (184 aa)) constitute an IRG-type G domain. GTP-binding positions include 60–67 (ESGAGKSS), 85–89 (TGVVE), and 215–217 (SNL). Ser246 and Ser303 each carry phosphoserine.

Belongs to the TRAFAC class dynamin-like GTPase superfamily. IRG family. In terms of assembly, interacts with PLIN2/ADRP and COX4I1/COXIV. Expressed in spermatozoa tails from the testis and epididymis, where it may be a component of the fibrous sheath (at protein level).

The protein resides in the cell projection. It is found in the cilium. Its subcellular location is the flagellum. The protein localises to the lipid droplet. The catalysed reaction is GTP + H2O = GDP + phosphate + H(+). Its function is as follows. Required for sperm motility and therefore male fertility, via positive regulation of spermatozoa fibrous sheath formation. The polypeptide is Interferon-inducible GTPase 5 (Mus musculus (Mouse)).